The following is a 93-amino-acid chain: Small ribosomal subunit protein uS19 (93 aa).

The protein belongs to the universal ribosomal protein uS19 family.

Functionally, protein S19 forms a complex with S13 that binds strongly to the 16S ribosomal RNA. This is Small ribosomal subunit protein uS19 from Acidothermus cellulolyticus (strain ATCC 43068 / DSM 8971 / 11B).